The sequence spans 616 residues: Membrane protein insertase YidC (616 aa).

The chain crosses the membrane as a helical span at residues 8–28 (MFVAIALSLVVLLGWHYFVTG). The interval 33 to 85 (RQRQAAQSQTAQTGAPQTADGIPSPSPREGGPNAPAPGTLPGAAAQGPVSRED) is disordered. Low complexity-rich tracts occupy residues 36–51 (QAAQSQTAQTGAPQTA) and 62–80 (GGPNAPAPGTLPGAAAQGP). The next 4 helical transmembrane spans lie at 386-406 (LLGNFGVSILLVTLILKLFFL), 460-480 (WPVLIQIPVFFALYKVLFITI), 516-536 (YIPIHLGVWPIIMGITMFIQM), and 551-571 (FAFMPIVFTFMLGSFPAGLVI).

Belongs to the OXA1/ALB3/YidC family. Type 1 subfamily. As to quaternary structure, interacts with the Sec translocase complex via SecD. Specifically interacts with transmembrane segments of nascent integral membrane proteins during membrane integration.

It localises to the cell inner membrane. Its function is as follows. Required for the insertion and/or proper folding and/or complex formation of integral membrane proteins into the membrane. Involved in integration of membrane proteins that insert both dependently and independently of the Sec translocase complex, as well as at least some lipoproteins. Aids folding of multispanning membrane proteins. The sequence is that of Membrane protein insertase YidC from Methylorubrum extorquens (strain PA1) (Methylobacterium extorquens).